A 386-amino-acid polypeptide reads, in one-letter code: Cell division protein FtsZ (386 aa).

GTP is bound by residues 21-25, 108-110, Glu-139, Arg-143, and Asn-187; these read GGGGN and GTG.

The protein belongs to the FtsZ family. As to quaternary structure, homodimer. Polymerizes to form a dynamic ring structure in a strictly GTP-dependent manner. Interacts directly with several other division proteins.

It localises to the cytoplasm. Essential cell division protein that forms a contractile ring structure (Z ring) at the future cell division site. The regulation of the ring assembly controls the timing and the location of cell division. One of the functions of the FtsZ ring is to recruit other cell division proteins to the septum to produce a new cell wall between the dividing cells. Binds GTP and shows GTPase activity. The sequence is that of Cell division protein FtsZ from Coxiella burnetii (strain RSA 493 / Nine Mile phase I).